Here is a 308-residue protein sequence, read N- to C-terminus: Tetraacyldisaccharide 4'-kinase (308 aa).

63–70 (SFGGNGKT) is an ATP binding site.

It belongs to the LpxK family.

The catalysed reaction is a lipid A disaccharide + ATP = a lipid IVA + ADP + H(+). It functions in the pathway glycolipid biosynthesis; lipid IV(A) biosynthesis; lipid IV(A) from (3R)-3-hydroxytetradecanoyl-[acyl-carrier-protein] and UDP-N-acetyl-alpha-D-glucosamine: step 6/6. Its function is as follows. Transfers the gamma-phosphate of ATP to the 4'-position of a tetraacyldisaccharide 1-phosphate intermediate (termed DS-1-P) to form tetraacyldisaccharide 1,4'-bis-phosphate (lipid IVA). The polypeptide is Tetraacyldisaccharide 4'-kinase (Campylobacter jejuni subsp. jejuni serotype O:2 (strain ATCC 700819 / NCTC 11168)).